Consider the following 298-residue polypeptide: DNA-3-methyladenine glycosylase (298 aa).

A mitochondrion-targeting transit peptide spans 1–17 (MVTPALQMKKPKQFCRR). The interval 1 to 65 (MVTPALQMKK…CPRERCLGPP (65 aa)) is disordered. Over residues 9-25 (KKPKQFCRRMGQKKQRP) the composition is skewed to basic residues. A phosphoserine mark is found at serine 78 and serine 252.

It belongs to the DNA glycosylase MPG family. In terms of assembly, binds MBD1. Binds SSBP1.

Its subcellular location is the cytoplasm. The protein localises to the mitochondrion matrix. The protein resides in the mitochondrion nucleoid. It localises to the nucleus. It carries out the reaction Hydrolysis of alkylated DNA, releasing 3-methyladenine, 3-methylguanine, 7-methylguanine and 7-methyladenine.. Binding to SSBP1 in mitochondria inhibits glycosylase activity in the context of a single-stranded DNA (ssDNA), but not a double-stranded DNA (dsDNA) substrates. Functionally, hydrolysis of the deoxyribose N-glycosidic bond to excise 3-methyladenine, and 7-methylguanine from the damaged DNA polymer formed by alkylation lesions. This is DNA-3-methyladenine glycosylase (MPG) from Homo sapiens (Human).